A 313-amino-acid chain; its full sequence is Porphobilinogen deaminase (313 aa).

S-(dipyrrolylmethanemethyl)cysteine is present on Cys-242.

It belongs to the HMBS family. In terms of assembly, monomer. It depends on dipyrromethane as a cofactor.

The catalysed reaction is 4 porphobilinogen + H2O = hydroxymethylbilane + 4 NH4(+). The protein operates within porphyrin-containing compound metabolism; protoporphyrin-IX biosynthesis; coproporphyrinogen-III from 5-aminolevulinate: step 2/4. Tetrapolymerization of the monopyrrole PBG into the hydroxymethylbilane pre-uroporphyrinogen in several discrete steps. The protein is Porphobilinogen deaminase of Pseudomonas paraeruginosa (strain DSM 24068 / PA7) (Pseudomonas aeruginosa (strain PA7)).